Reading from the N-terminus, the 249-residue chain is MALGAIGDGRLLLLLVGLLSASGPSPTLAIHVYTPREVYGTVGSHVTLSCSFWSSEWISEDISYTWHFQAEGSRDSISIFHYGKGQPYIDDVGSFKERMEWVGNPRRKDGSIVIHNLDYTDNGTFTCDVKNPPDIVGKSSQVTLYVLEKVPTRYGVVLGSIIGGVLLLVALLVAVVYLVRFCWLRRQAVLQRRLSAMEKGKLQRSAKDASKRSRQPPVLYAMLDHSRSAKAAAEKKSKGAPGEARKDKK.

An N-terminal signal peptide occupies residues 1–29 (MALGAIGDGRLLLLLVGLLSASGPSPTLA). Residues 30-143 (IHVYTPREVY…DIVGKSSQVT (114 aa)) enclose the Ig-like V-type domain. The Extracellular segment spans residues 30–153 (IHVYTPREVY…LYVLEKVPTR (124 aa)). A disulfide bridge links Cys-50 with Cys-127. N-linked (GlcNAc...) asparagine glycosylation occurs at Asn-122. Residues 154 to 179 (YGVVLGSIIGGVLLLVALLVAVVYLV) form a helical membrane-spanning segment. At 180-249 (RFCWLRRQAV…APGEARKDKK (70 aa)) the chain is on the cytoplasmic side. The segment at 227–249 (RSAKAAAEKKSKGAPGEARKDKK) is disordered.

This sequence belongs to the myelin P0 protein family. In terms of tissue distribution, found only in peripheral nervous system Schwann cells.

The protein localises to the cell membrane. Functionally, is an adhesion molecule necessary for normal myelination in the peripheral nervous system. It mediates adhesion between adjacent myelin wraps and ultimately drives myelin compaction. This is Myelin protein P0 (MPZ) from Gallus gallus (Chicken).